The primary structure comprises 684 residues: Glycine--tRNA ligase beta subunit (684 aa).

It belongs to the class-II aminoacyl-tRNA synthetase family. In terms of assembly, tetramer of two alpha and two beta subunits.

It is found in the cytoplasm. The catalysed reaction is tRNA(Gly) + glycine + ATP = glycyl-tRNA(Gly) + AMP + diphosphate. In Pseudomonas syringae pv. tomato (strain ATCC BAA-871 / DC3000), this protein is Glycine--tRNA ligase beta subunit.